Consider the following 161-residue polypeptide: Negative cofactor 2 complex subunit beta (161 aa).

The 65-residue stretch at 11–75 folds into the Histone-fold domain; sequence SLPKATVQKM…IAAEHIIKAL (65 aa). Residues 93–107 show a composition bias toward basic and acidic residues; the sequence is EHKEQQKNREKKSSK. 2 disordered regions span residues 93–116 and 130–161; these read EHKEQQKNREKKSSKFEQSGVSRD and RERFKNQNIAHDNHTTTAIPVPTASETETKEN. Over residues 135–147 the composition is skewed to polar residues; it reads NQNIAHDNHTTTA.

It belongs to the NC2 beta/DR1 family.

The protein localises to the cytoplasm. It is found in the nucleus. The polypeptide is Negative cofactor 2 complex subunit beta (ncb2) (Schizosaccharomyces pombe (strain 972 / ATCC 24843) (Fission yeast)).